The sequence spans 214 residues: Predicted GPI-anchored protein 57 (214 aa).

The first 18 residues, 1–18 (MLFTQLIILFTFISQIIC), serve as a signal peptide directing secretion. Residues 36–101 (RGSSGHSSGG…SSGSSSGSRN (66 aa)) are disordered. Residues 42–60 (SSGGGHSSSGSHSSGGGHS) show a composition bias toward gly residues. A compositionally biased stretch (low complexity) spans 76-85 (SGSSSGSSSG). An N-linked (GlcNAc...) asparagine glycan is attached at asparagine 182. Residue glycine 191 is the site of GPI-anchor amidated glycine attachment. Positions 192–214 (VSLNIPSTHFYVIGLAAAYSIVL) are cleaved as a propeptide — removed in mature form.

It belongs to the PGA37 family.

Its subcellular location is the secreted. It localises to the cell membrane. Predicted GPI-anchored protein which may have a role during host infection. This chain is Predicted GPI-anchored protein 57 (PGA57), found in Candida albicans (strain SC5314 / ATCC MYA-2876) (Yeast).